The following is a 118-amino-acid chain: Holo-[acyl-carrier-protein] synthase (118 aa).

Positions 8 and 57 each coordinate Mg(2+).

Belongs to the P-Pant transferase superfamily. AcpS family. Mg(2+) is required as a cofactor.

It localises to the cytoplasm. The catalysed reaction is apo-[ACP] + CoA = holo-[ACP] + adenosine 3',5'-bisphosphate + H(+). Transfers the 4'-phosphopantetheine moiety from coenzyme A to a Ser of acyl-carrier-protein. The chain is Holo-[acyl-carrier-protein] synthase from Pediococcus pentosaceus (strain ATCC 25745 / CCUG 21536 / LMG 10740 / 183-1w).